We begin with the raw amino-acid sequence, 61 residues long: Large ribosomal subunit protein bL32 (61 aa).

Over residues 1–10 (MAQPKKKTSN) the composition is skewed to basic residues. Residues 1 to 23 (MAQPKKKTSNAKRDQRRATWKRK) form a disordered region.

This sequence belongs to the bacterial ribosomal protein bL32 family.

In Gloeobacter violaceus (strain ATCC 29082 / PCC 7421), this protein is Large ribosomal subunit protein bL32.